The following is a 532-amino-acid chain: Nitrogenase molybdenum-iron protein alpha chain (532 aa).

[8Fe-7S] cluster-binding residues include C62, C88, and C153. Residues C271 and H489 each contribute to the [7Fe-Mo-9S-C-homocitryl] cluster site.

The protein belongs to the NifD/NifK/NifE/NifN family. Tetramer of two alpha and two beta chains. Forms complex with the iron protein (nitrogenase component 2). [8Fe-7S] cluster is required as a cofactor. Requires [7Fe-Mo-9S-C-homocitryl] cluster as cofactor.

It catalyses the reaction N2 + 8 reduced [2Fe-2S]-[ferredoxin] + 16 ATP + 16 H2O = H2 + 8 oxidized [2Fe-2S]-[ferredoxin] + 2 NH4(+) + 16 ADP + 16 phosphate + 6 H(+). Its function is as follows. This molybdenum-iron protein is part of the nitrogenase complex that catalyzes the key enzymatic reactions in nitrogen fixation. This chain is Nitrogenase molybdenum-iron protein alpha chain (nifD2), found in Methanosarcina barkeri.